Consider the following 349-residue polypeptide: Nicotinate-nucleotide--dimethylbenzimidazole phosphoribosyltransferase (349 aa).

Catalysis depends on Glu313, which acts as the Proton acceptor.

This sequence belongs to the CobT family.

The catalysed reaction is 5,6-dimethylbenzimidazole + nicotinate beta-D-ribonucleotide = alpha-ribazole 5'-phosphate + nicotinate + H(+). Its pathway is nucleoside biosynthesis; alpha-ribazole biosynthesis; alpha-ribazole from 5,6-dimethylbenzimidazole: step 1/2. Catalyzes the synthesis of alpha-ribazole-5'-phosphate from nicotinate mononucleotide (NAMN) and 5,6-dimethylbenzimidazole (DMB). The sequence is that of Nicotinate-nucleotide--dimethylbenzimidazole phosphoribosyltransferase from Mycobacterium avium (strain 104).